The primary structure comprises 317 residues: Methionyl-tRNA formyltransferase (317 aa).

A (6S)-5,6,7,8-tetrahydrofolate-binding site is contributed by 112-115 (SLLP).

The protein belongs to the Fmt family.

It carries out the reaction L-methionyl-tRNA(fMet) + (6R)-10-formyltetrahydrofolate = N-formyl-L-methionyl-tRNA(fMet) + (6S)-5,6,7,8-tetrahydrofolate + H(+). In terms of biological role, attaches a formyl group to the free amino group of methionyl-tRNA(fMet). The formyl group appears to play a dual role in the initiator identity of N-formylmethionyl-tRNA by promoting its recognition by IF2 and preventing the misappropriation of this tRNA by the elongation apparatus. This chain is Methionyl-tRNA formyltransferase, found in Mycoplasma capricolum subsp. capricolum (strain California kid / ATCC 27343 / NCTC 10154).